The primary structure comprises 391 residues: Na(+)/H(+) antiporter NhaA 1 (391 aa).

11 helical membrane passes run Phe-19–Ile-39, Val-56–Leu-76, Ala-98–Ile-118, Gly-128–Gly-148, Val-157–Phe-177, Ser-180–Leu-200, Leu-208–His-228, Val-264–Ile-284, Val-297–Ile-317, Gly-335–Phe-355, and Glu-364–Leu-384.

It belongs to the NhaA Na(+)/H(+) (TC 2.A.33) antiporter family.

The protein localises to the cell inner membrane. It catalyses the reaction Na(+)(in) + 2 H(+)(out) = Na(+)(out) + 2 H(+)(in). Functionally, na(+)/H(+) antiporter that extrudes sodium in exchange for external protons. This chain is Na(+)/H(+) antiporter NhaA 1, found in Pseudomonas savastanoi pv. phaseolicola (strain 1448A / Race 6) (Pseudomonas syringae pv. phaseolicola (strain 1448A / Race 6)).